The sequence spans 220 residues: Ribose-5-phosphate isomerase A (220 aa).

Residues threonine 25–threonine 28, aspartate 80–aspartate 83, and lysine 93–glycine 96 each bind substrate. Glutamate 102 (proton acceptor) is an active-site residue. Lysine 120 contacts substrate.

The protein belongs to the ribose 5-phosphate isomerase family. Homodimer.

The catalysed reaction is aldehydo-D-ribose 5-phosphate = D-ribulose 5-phosphate. It participates in carbohydrate degradation; pentose phosphate pathway; D-ribose 5-phosphate from D-ribulose 5-phosphate (non-oxidative stage): step 1/1. In terms of biological role, catalyzes the reversible conversion of ribose-5-phosphate to ribulose 5-phosphate. This is Ribose-5-phosphate isomerase A from Bacillus cereus (strain ATCC 10987 / NRS 248).